The primary structure comprises 813 residues: Phenylalanine--tRNA ligase beta subunit (813 aa).

The region spanning 42-151 (AKDFNHVVIG…ADAPVGKAYA (110 aa)) is the tRNA-binding domain. One can recognise a B5 domain in the interval 405 to 480 (VKKAPVDITI…RLNGYEHIPE (76 aa)). Asp458, Asp464, Glu467, and Glu468 together coordinate Mg(2+). One can recognise an FDX-ACB domain in the interval 720-813 (SKFPIVERDF…LKKNFDLSVR (94 aa)).

The protein belongs to the phenylalanyl-tRNA synthetase beta subunit family. Type 1 subfamily. In terms of assembly, tetramer of two alpha and two beta subunits. Requires Mg(2+) as cofactor.

It localises to the cytoplasm. The enzyme catalyses tRNA(Phe) + L-phenylalanine + ATP = L-phenylalanyl-tRNA(Phe) + AMP + diphosphate + H(+). This chain is Phenylalanine--tRNA ligase beta subunit, found in Bdellovibrio bacteriovorus (strain ATCC 15356 / DSM 50701 / NCIMB 9529 / HD100).